The primary structure comprises 39 residues: Natriuretic peptide PaNP-d (39 aa).

Residues Ser-1–Ile-8 constitute a propeptide that is removed on maturation. A disordered region spans residues Ser-1–Ser-39. Residues Cys-12 and Cys-28 are joined by a disulfide bond.

Belongs to the natriuretic peptide family. In terms of tissue distribution, expressed by the venom gland.

The protein resides in the secreted. Functionally, snake venom natriuretic peptide that targets both NPR1 and NPR2. Exhibits hypotensive and vasodepressor activities. This Pseudechis australis (Mulga snake) protein is Natriuretic peptide PaNP-d.